A 158-amino-acid chain; its full sequence is NAD(P)H-quinone oxidoreductase subunit N, organellar chromatophore (158 aa).

It belongs to the complex I NdhN subunit family. In terms of assembly, NDH-1 can be composed of about 15 different subunits; different subcomplexes with different compositions have been identified which probably have different functions.

The protein localises to the plastid. Its subcellular location is the organellar chromatophore thylakoid membrane. It carries out the reaction a plastoquinone + NADH + (n+1) H(+)(in) = a plastoquinol + NAD(+) + n H(+)(out). It catalyses the reaction a plastoquinone + NADPH + (n+1) H(+)(in) = a plastoquinol + NADP(+) + n H(+)(out). In terms of biological role, NDH-1 shuttles electrons from an unknown electron donor, via FMN and iron-sulfur (Fe-S) centers, to quinones in the respiratory and/or the photosynthetic chain. The immediate electron acceptor for the enzyme in this species is believed to be plastoquinone. Couples the redox reaction to proton translocation, and thus conserves the redox energy in a proton gradient. The chain is NAD(P)H-quinone oxidoreductase subunit N, organellar chromatophore from Paulinella chromatophora.